The following is a 572-amino-acid chain: Glypican-5 (572 aa).

A signal peptide spans 1 to 24 (MDAQTWPVGFRCLLLLALVGSARS). N-linked (GlcNAc...) asparagine glycans are attached at residues N120 and N237. Positions 355–375 (SPRCSFDQSKEKHGMKTTTRN) are disordered. S441, S486, S495, S507, and S509 each carry an O-linked (Xyl...) (glycosaminoglycan) serine glycan. N527 carries an N-linked (GlcNAc...) asparagine glycan.

It belongs to the glypican family. As to expression, in adult, primarily expressed in the brain. Also detected in fetal brain, lung and liver.

Its subcellular location is the cell membrane. It is found in the secreted. The protein resides in the extracellular space. Its function is as follows. Cell surface proteoglycan that bears heparan sulfate. This is Glypican-5 (GPC5) from Homo sapiens (Human).